Reading from the N-terminus, the 20-residue chain is Cytochrome P450 3A5 (20 aa).

It belongs to the cytochrome P450 family. Heme serves as cofactor.

The protein localises to the endoplasmic reticulum membrane. The protein resides in the microsome membrane. The catalysed reaction is an organic molecule + reduced [NADPH--hemoprotein reductase] + O2 = an alcohol + oxidized [NADPH--hemoprotein reductase] + H2O + H(+). Its function is as follows. 6-beta-testosterone hydroxylase. In Papio sp. (Baboon), this protein is Cytochrome P450 3A5.